Here is a 438-residue protein sequence, read N- to C-terminus: Ribosomal protein uS12 methylthiotransferase RimO (438 aa).

The 111-residue stretch at 5 to 115 folds into the MTTase N-terminal domain; sequence PRVGFVSLGC…VMSAVHTHLP (111 aa). Positions 14, 50, 79, 146, 150, and 153 each coordinate [4Fe-4S] cluster. The Radical SAM core domain occupies 132-369; the sequence is LTPKHYAYLK…MAVQAEISAR (238 aa). The TRAM domain maps to 372–438; it reads ERRVGQTLQV…SEHDLWGERR (67 aa).

This sequence belongs to the methylthiotransferase family. RimO subfamily. [4Fe-4S] cluster is required as a cofactor.

It localises to the cytoplasm. It catalyses the reaction L-aspartate(89)-[ribosomal protein uS12]-hydrogen + (sulfur carrier)-SH + AH2 + 2 S-adenosyl-L-methionine = 3-methylsulfanyl-L-aspartate(89)-[ribosomal protein uS12]-hydrogen + (sulfur carrier)-H + 5'-deoxyadenosine + L-methionine + A + S-adenosyl-L-homocysteine + 2 H(+). Functionally, catalyzes the methylthiolation of an aspartic acid residue of ribosomal protein uS12. This Chromobacterium violaceum (strain ATCC 12472 / DSM 30191 / JCM 1249 / CCUG 213 / NBRC 12614 / NCIMB 9131 / NCTC 9757 / MK) protein is Ribosomal protein uS12 methylthiotransferase RimO.